Consider the following 617-residue polypeptide: MSSARLCSLVAELGYEGAGKLDPDSFEWPFQYDDARPILDWICSSLRPSNVLSLAELSLYEQFQRDGKLLEGDDLDQAYDSISAFSSRRNNQEAVFGAEESIKEVRDATLAHKAEALELQRQLRRLQTQYDLLTGQSSALIQGRRARVAATSAVSGQITAIEDSLSARNLQMNGVLGRLASTSQELAHYHSGEEDGIYLAYSDFHAYLAGDSACTKELNQWFAKQLDTGPYRLVAEEGKSKCSWVSLDDTSNMLRDLEKSQHQRVAELQRLRSIFGTSERQWIEAQVENAKQQAILLTLKSQVTSVEAHIHFDLHSLRRKHADLVEEISTLYQKEEKLLSETIPELCWELAQLQDTYILQGDYDLKVMRQELYISKQKVFINHLVNQLARHQFLKLACQLEKKNMLGAFSLLKVIESELQGYLSATRSRVGRCSALIQAASDVQEQGAVDDRDSFLHGVRDLLSIHSNTQAGLSTYVSAPAIIQQIVALQSDLSSLQSDLENSLPDDRNRCINELCTHIQNLQQLLFASSTTAQPILTPWPLMKELDEMGKINSKLSTAVEEVTLEHRNKREIVKHHAKDVELQRRVFVDFFCNPERLRNQVRELNALVRARQASSS.

Coiled-coil stretches lie at residues 107–140 (DATL…SSAL), 314–334 (LHSL…LYQK), and 481–504 (AIIQ…ENSL).

The protein belongs to the HAUS3 family. Part of the augmin complex composed of 8 subunits. The complex acts on microtubules and interacts with gamma-tubulin in spindles and the phragmoplast. Interacts with AUG1.

The protein resides in the cytoplasm. The protein localises to the cytoskeleton. It localises to the spindle. It is found in the phragmoplast. Involved in microtubules reorganization during spindle and phragmoplast development. Required for gamma-tubulin localization during mitosis. This Arabidopsis thaliana (Mouse-ear cress) protein is AUGMIN subunit 3.